Consider the following 267-residue polypeptide: Acyl-[acyl-carrier-protein]--UDP-N-acetylglucosamine O-acyltransferase (267 aa).

This sequence belongs to the transferase hexapeptide repeat family. LpxA subfamily. Homotrimer.

The protein localises to the cytoplasm. The catalysed reaction is a (3R)-hydroxyacyl-[ACP] + UDP-N-acetyl-alpha-D-glucosamine = a UDP-3-O-[(3R)-3-hydroxyacyl]-N-acetyl-alpha-D-glucosamine + holo-[ACP]. The protein operates within glycolipid biosynthesis; lipid IV(A) biosynthesis; lipid IV(A) from (3R)-3-hydroxytetradecanoyl-[acyl-carrier-protein] and UDP-N-acetyl-alpha-D-glucosamine: step 1/6. Involved in the biosynthesis of lipid A, a phosphorylated glycolipid that anchors the lipopolysaccharide to the outer membrane of the cell. This is Acyl-[acyl-carrier-protein]--UDP-N-acetylglucosamine O-acyltransferase from Cupriavidus taiwanensis (strain DSM 17343 / BCRC 17206 / CCUG 44338 / CIP 107171 / LMG 19424 / R1) (Ralstonia taiwanensis (strain LMG 19424)).